The primary structure comprises 367 residues: Phosphoribosylaminoimidazole-succinocarboxamide synthase (367 aa).

Belongs to the SAICAR synthetase family.

It carries out the reaction 5-amino-1-(5-phospho-D-ribosyl)imidazole-4-carboxylate + L-aspartate + ATP = (2S)-2-[5-amino-1-(5-phospho-beta-D-ribosyl)imidazole-4-carboxamido]succinate + ADP + phosphate + 2 H(+). It participates in purine metabolism; IMP biosynthesis via de novo pathway; 5-amino-1-(5-phospho-D-ribosyl)imidazole-4-carboxamide from 5-amino-1-(5-phospho-D-ribosyl)imidazole-4-carboxylate: step 1/2. This is Phosphoribosylaminoimidazole-succinocarboxamide synthase from Psychromonas ingrahamii (strain DSM 17664 / CCUG 51855 / 37).